The chain runs to 962 residues: Integrator complex subunit 7 (962 aa).

Residues Ser-338 and Ser-809 each carry the phosphoserine modification.

This sequence belongs to the Integrator subunit 7 family. In terms of assembly, component of the Integrator complex, composed of core subunits INTS1, INTS2, INTS3, INTS4, INTS5, INTS6, INTS7, INTS8, INTS9/RC74, INTS10, INTS11/CPSF3L, INTS12, INTS13, INTS14 and INTS15. The core complex associates with protein phosphatase 2A subunits PPP2CA and PPP2R1A, to form the Integrator-PP2A (INTAC) complex. Interacts with NABP2.

The protein localises to the nucleus. It localises to the chromosome. The protein resides in the cytoplasm. Functionally, component of the integrator complex, a multiprotein complex that terminates RNA polymerase II (Pol II) transcription in the promoter-proximal region of genes. The integrator complex provides a quality checkpoint during transcription elongation by driving premature transcription termination of transcripts that are unfavorably configured for transcriptional elongation: the complex terminates transcription by (1) catalyzing dephosphorylation of the C-terminal domain (CTD) of Pol II subunit POLR2A/RPB1 and SUPT5H/SPT5, (2) degrading the exiting nascent RNA transcript via endonuclease activity and (3) promoting the release of Pol II from bound DNA. The integrator complex is also involved in terminating the synthesis of non-coding Pol II transcripts, such as enhancer RNAs (eRNAs), small nuclear RNAs (snRNAs), telomerase RNAs and long non-coding RNAs (lncRNAs). May be not involved in the recruitment of cytoplasmic dynein to the nuclear envelope by different components of the INT complex. Plays a role in DNA damage response (DDR) signaling during the S phase. The polypeptide is Integrator complex subunit 7 (INTS7) (Bos taurus (Bovine)).